The primary structure comprises 285 residues: Xanthoxin dehydrogenase (285 aa).

The residue at position 2 (S2) is an N-acetylserine.

It belongs to the short-chain dehydrogenases/reductases (SDR) family. Predominantly in roots and stems, and at lower levels in leaves and seeds.

The protein localises to the cytoplasm. It carries out the reaction 2-cis,4-trans-xanthoxin + NAD(+) = 2-cis-(+)-abscisic aldehyde + NADH + H(+). The enzyme catalyses 2-trans,4-trans-xanthoxin + NAD(+) = 2-trans-(+)-abscisic aldehyde + NADH + H(+). Involved in the biosynthesis of abscisic acid. Catalyzes the conversion of xanthoxin to abscisic aldehyde. This is Xanthoxin dehydrogenase from Arabidopsis thaliana (Mouse-ear cress).